The chain runs to 832 residues: Sodium/hydrogen exchanger 3 (832 aa).

The N-terminal stretch at 1 to 29 (MGRNRSGCVARCVSLTALVLLLCCPVVRS) is a signal peptide. Over 30–66 (SEAETDPDSHTEHGDSHGGSREGNDTGFQIVTFRWEH) the chain is Extracellular. Positions 31–51 (EAETDPDSHTEHGDSHGGSRE) are disordered. The segment covering 36 to 51 (PDSHTEHGDSHGGSRE) has biased composition (basic and acidic residues). A helical transmembrane segment spans residues 67–89 (VQTPYVIALWILVASLGKIVFHL). Over 90-97 (SEKVTSVV) the chain is Cytoplasmic. The helical transmembrane segment at 98–117 (PESALLIVLGLILGGIVWAA) threads the bilayer. The Extracellular segment spans residues 118–126 (DHSASFTLT). The helical transmembrane segment at 127 to 144 (PTVFFFYLLPPIVLDAGY) threads the bilayer. The Cytoplasmic segment spans residues 145 to 147 (FMP). A helical membrane pass occupies residues 148-183 (NRHFFGNLGTILTYAVIGTVWNAATTGLSLYGVFLL). 3 residues coordinate a 1,2-diacyl-sn-glycero-3-phospho-(1D-myo-inositol): Gly153, Gly156, and Thr157. Topologically, residues 184 to 196 (GLMGDLKAGLLEF) are extracellular. Residues 197-218 (LLFGSLIAAVDPVAVLAVFEEV) form a helical membrane-spanning segment. Topologically, residues 219-220 (HV) are cytoplasmic. The helical transmembrane segment at 221–252 (NEVLFIIVFGESLLNDAVTVVLYNVFNSFVEV) threads the bilayer. Residues 253–259 (GAGNVQG) lie on the Extracellular side of the membrane. Residues 260-294 (LDYFKGIVSFFVVSLGGTAVGIIFAFILSLVTRFT) form a helical membrane-spanning segment. Over 295–296 (KH) the chain is Cytoplasmic. A helical membrane pass occupies residues 297–319 (VRVIEPGFVFVISYLSYLTADML). The Extracellular portion of the chain corresponds to 320-321 (SL). Residues 322–338 (SAILAITFCGICCQKYV) form a helical membrane-spanning segment. The Cytoplasmic segment spans residues 339 to 345 (KANLCEQ). A helical membrane pass occupies residues 346–374 (SITTVRYAMKMLASGAETIIFMFLGISAV). Topologically, residues 375-382 (NPTIWTWN) are extracellular. The helical transmembrane segment at 383–404 (TAFILLTLVFISVYRVIGVVIQ) threads the bilayer. Residues 405-417 (TWILNHYRVVQLE) lie on the Cytoplasmic side of the membrane. Residues 418–441 (IIDQVVMSYGGLRGAVAFALVVLL) traverse the membrane as a helical segment. Residues 442-448 (DSNYVGE) are Extracellular-facing. The helical transmembrane segment at 449 to 482 (RRLFVSTTIIVVYFTVIFQGLTIKPLVKWLKVKR) threads the bilayer. The Cytoplasmic segment spans residues 483 to 832 (SQHKEPLLNE…PLSFLPESSM (350 aa)). Residues Gln512, Ile513, and His515 each coordinate a 1,2-diacyl-sn-glycero-3-phospho-(1D-myo-inositol). Residues 740 to 760 (TPASNDADETGTGIDNPSFSN) form a disordered region.

Belongs to the monovalent cation:proton antiporter 1 (CPA1) transporter (TC 2.A.36) family. Homodimer. Detected in early distal renal tubules in the kidney bundle zone, in proximal and late distal tubules in the kidney sinus zone, in absorptive epithelial cells of the intestine and in rectal epithelium (at protein level). Isoform 1 is expressed strongly in the gills, at intermediate levels in the kidney, spleen, rectum, spiral intestine and skin, and weakly in the brain, blood and rectal gland. Isoform 2 is expressed strongly in the kidney, rectum and spiral intestine, and weakly in muscles and the rectal gland.

It is found in the apical cell membrane. It localises to the cell membrane. The protein resides in the recycling endosome membrane. Its subcellular location is the early endosome membrane. The enzyme catalyses Na(+)(in) + H(+)(out) = Na(+)(out) + H(+)(in). With respect to regulation, seems to switch between active and inactive modes in response to various stimuli. Activated directly or indirectly by membrane phosphatidylinositol (PIs). Regulated by a variety of auxiliary proteins, which facilitate the maturation, cell surface expression and function of the transporter. Inhibited specifically by the drug tenapanor. Functionally, plasma membrane Na(+)/H(+) antiporter. Exchanges intracellular H(+) ions for extracellular Na(+) in 1:1 stoichiometry, playing a key role in salt and fluid absorption and pH homeostasis. Major apical Na(+)/H(+) exchanger in kidney and intestine playing an important role in renal and intestine Na(+) absorption and blood pressure regulation. The sequence is that of Sodium/hydrogen exchanger 3 from Triakis scyllium (Banded houndshark).